The primary structure comprises 660 residues: Cullin-associated NEDD8-dissociated protein 1 homolog (660 aa).

Lys16 participates in a covalent cross-link: Glycyl lysine isopeptide (Lys-Gly) (interchain with G-Cter in NEDD8). A disordered region spans residues 339–364; sequence TQNENDHGSDNLIDSDDGFGSDNDPE. The segment covering 351–363 has biased composition (acidic residues); it reads IDSDDGFGSDNDP.

As to quaternary structure, interacts with unneddylated cullin CDC53. In terms of processing, neddylated at Lys-16.

Assembly factor of SCF (SKP1-CUL1-F-box protein) E3 ubiquitin ligase complexes that promotes the exchange of the substrate-recognition F-box subunit in SCF complexes, thereby playing a key role in the cellular repertoire of SCF complexes. Acts as a F-box protein exchange factor. Involved in the aging process. Longevity-assurance protein. This chain is Cullin-associated NEDD8-dissociated protein 1 homolog (LAG2), found in Saccharomyces cerevisiae (strain ATCC 204508 / S288c) (Baker's yeast).